The chain runs to 124 residues: S-adenosylmethionine decarboxylase proenzyme (124 aa).

The active-site Schiff-base intermediate with substrate; via pyruvic acid is the S63. Position 63 is a pyruvic acid (Ser); by autocatalysis (S63). Catalysis depends on H68, which acts as the Proton acceptor; for processing activity. C83 serves as the catalytic Proton donor; for catalytic activity.

Belongs to the prokaryotic AdoMetDC family. Type 1 subfamily. As to quaternary structure, heterotetramer of two alpha and two beta chains arranged as a dimer of alpha/beta heterodimers. Pyruvate serves as cofactor. Post-translationally, is synthesized initially as an inactive proenzyme. Formation of the active enzyme involves a self-maturation process in which the active site pyruvoyl group is generated from an internal serine residue via an autocatalytic post-translational modification. Two non-identical subunits are generated from the proenzyme in this reaction, and the pyruvate is formed at the N-terminus of the alpha chain, which is derived from the carboxyl end of the proenzyme. The post-translation cleavage follows an unusual pathway, termed non-hydrolytic serinolysis, in which the side chain hydroxyl group of the serine supplies its oxygen atom to form the C-terminus of the beta chain, while the remainder of the serine residue undergoes an oxidative deamination to produce ammonia and the pyruvoyl group blocking the N-terminus of the alpha chain.

The enzyme catalyses S-adenosyl-L-methionine + H(+) = S-adenosyl 3-(methylsulfanyl)propylamine + CO2. It functions in the pathway amine and polyamine biosynthesis; S-adenosylmethioninamine biosynthesis; S-adenosylmethioninamine from S-adenosyl-L-methionine: step 1/1. Its function is as follows. Catalyzes the decarboxylation of S-adenosylmethionine to S-adenosylmethioninamine (dcAdoMet), the propylamine donor required for the synthesis of the polyamines spermine and spermidine from the diamine putrescine. This is S-adenosylmethionine decarboxylase proenzyme from Caldanaerobacter subterraneus subsp. tengcongensis (strain DSM 15242 / JCM 11007 / NBRC 100824 / MB4) (Thermoanaerobacter tengcongensis).